The sequence spans 574 residues: Probable inactive serine/threonine-protein kinase slob2 (574 aa).

The helical transmembrane segment at 6–26 threads the bilayer; that stretch reads YIIIAAVGGFAILTFIIIVVL. Positions 166–346 constitute a Protein kinase domain; that stretch reads YADRGSLRDF…PLHRLTYTSR (181 aa). The N-linked (GlcNAc...) asparagine glycan is linked to asparagine 358. The interval 366–386 is disordered; the sequence is SKPNSKDLSQPKLKDLKKQKK. Asparagine 440, asparagine 449, asparagine 453, asparagine 456, asparagine 464, asparagine 470, asparagine 477, and asparagine 483 each carry an N-linked (GlcNAc...) asparagine glycan. A compositionally biased stretch (low complexity) spans 450–493; the sequence is TTTNTTNTSTSSSLNSSFNSNVSTSYSNATTTTNTTSASSVSPP. The interval 450–574 is disordered; that stretch reads TTTNTTNTST…DKSGPLLKKS (125 aa). Positions 494-539 are enriched in pro residues; the sequence is ISSPPPPPPPPPPSKSSGPPPPPPPPPKSSGPPPPPPPKSSPPPPA. Positions 546–556 are enriched in low complexity; that stretch reads LLSSIESFSSS.

It belongs to the protein kinase superfamily. Ser/Thr protein kinase family.

The protein resides in the membrane. This is Probable inactive serine/threonine-protein kinase slob2 (slob2) from Dictyostelium discoideum (Social amoeba).